Reading from the N-terminus, the 305-residue chain is Mitochondrial citrate transporter D (305 aa).

3 Solcar repeats span residues 10 to 101, 111 to 197, and 211 to 298; these read LPFG…WGAF, QTQS…VRAQ, and RNDL…VMDF. 6 helical membrane-spanning segments follow: residues 16 to 36, 78 to 98, 118 to 137, 176 to 196, 208 to 228, and 270 to 291; these read FIAGAVAGVSEILVMYPLDVV, SAPILMEAPKRATKFAANDSW, LTGATAGATESFVVVPFELV, TLWRHILWNSGYFGCIFQVRA, QQTRNDLIAGTIGGTAGTILN, and LYKGFLPKVLRLGPGGGILLVV.

This sequence belongs to the mitochondrial carrier (TC 2.A.29) family.

The protein resides in the mitochondrion inner membrane. The enzyme catalyses citrate(in) + H(+)(in) = citrate(out) + H(+)(out). Mitochondrial transporter that mediates citrate export from mitochondria to cytoplasm. Both ctpA, ctpB, and ctpD play important roles in citric acid transport across the mitochondrial membrane and function in a redundant manner. In Aspergillus niger (strain ATCC 1015 / CBS 113.46 / FGSC A1144 / LSHB Ac4 / NCTC 3858a / NRRL 328 / USDA 3528.7), this protein is Mitochondrial citrate transporter D.